Here is a 176-residue protein sequence, read N- to C-terminus: Large ribosomal subunit protein uL6 (176 aa).

Belongs to the universal ribosomal protein uL6 family. As to quaternary structure, part of the 50S ribosomal subunit.

This protein binds to the 23S rRNA, and is important in its secondary structure. It is located near the subunit interface in the base of the L7/L12 stalk, and near the tRNA binding site of the peptidyltransferase center. The sequence is that of Large ribosomal subunit protein uL6 from Lactobacillus gasseri (strain ATCC 33323 / DSM 20243 / BCRC 14619 / CIP 102991 / JCM 1131 / KCTC 3163 / NCIMB 11718 / NCTC 13722 / AM63).